We begin with the raw amino-acid sequence, 389 residues long: S-adenosylmethionine synthase (389 aa).

Residue H18 coordinates ATP. Position 20 (D20) interacts with Mg(2+). K(+) is bound at residue E46. Positions 59 and 103 each coordinate L-methionine. The segment at 103–113 (QSADIAMGVDS) is flexible loop. ATP is bound by residues 168 to 170 (DSK), D244, 250 to 251 (RK), A267, and K271. L-methionine is bound at residue D244. K275 contacts L-methionine.

This sequence belongs to the AdoMet synthase family. Homotetramer; dimer of dimers. It depends on Mg(2+) as a cofactor. Requires K(+) as cofactor.

It localises to the cytoplasm. It carries out the reaction L-methionine + ATP + H2O = S-adenosyl-L-methionine + phosphate + diphosphate. It functions in the pathway amino-acid biosynthesis; S-adenosyl-L-methionine biosynthesis; S-adenosyl-L-methionine from L-methionine: step 1/1. Its function is as follows. Catalyzes the formation of S-adenosylmethionine (AdoMet) from methionine and ATP. The overall synthetic reaction is composed of two sequential steps, AdoMet formation and the subsequent tripolyphosphate hydrolysis which occurs prior to release of AdoMet from the enzyme. The protein is S-adenosylmethionine synthase of Pelagibacter ubique (strain HTCC1062).